The primary structure comprises 1076 residues: Carbamoyl phosphate synthase large chain (1076 aa).

The carboxyphosphate synthetic domain stretch occupies residues 1 to 403; sequence MPKRTDIQSI…SLQKALRGLE (403 aa). Positions 129, 169, 175, 176, 208, 210, 215, 241, 242, 243, 285, and 299 each coordinate ATP. An ATP-grasp 1 domain is found at 133 to 328; that stretch reads DQAMKRIGLE…IAKIAAKLAV (196 aa). Mg(2+)-binding residues include Gln285, Glu299, and Asn301. Positions 285, 299, and 301 each coordinate Mn(2+). An oligomerization domain region spans residues 404–553; the sequence is TGNDGLDPKV…YSSYEEECEA (150 aa). Positions 554–935 are carbamoyl phosphate synthetic domain; that stretch reads EVSDRPKIMV…AFYKAQLGAG (382 aa). The ATP-grasp 2 domain maps to 678 to 869; that stretch reads QHMVDKLGLK…LAQVAARCMA (192 aa). The ATP site is built by Arg714, His753, Leu755, Glu760, Gly785, Val786, His787, Ser788, Gln828, and Glu840. Residues Gln828, Glu840, and Asn842 each coordinate Mg(2+). Mn(2+) is bound by residues Gln828, Glu840, and Asn842. The MGS-like domain occupies 936–1076; it reads EAIPALEGER…LQELHAGVSQ (141 aa). An allosteric domain region spans residues 936 to 1076; sequence EAIPALEGER…LQELHAGVSQ (141 aa).

Belongs to the CarB family. As to quaternary structure, composed of two chains; the small (or glutamine) chain promotes the hydrolysis of glutamine to ammonia, which is used by the large (or ammonia) chain to synthesize carbamoyl phosphate. Tetramer of heterodimers (alpha,beta)4. It depends on Mg(2+) as a cofactor. The cofactor is Mn(2+).

The enzyme catalyses hydrogencarbonate + L-glutamine + 2 ATP + H2O = carbamoyl phosphate + L-glutamate + 2 ADP + phosphate + 2 H(+). It carries out the reaction hydrogencarbonate + NH4(+) + 2 ATP = carbamoyl phosphate + 2 ADP + phosphate + 2 H(+). The protein operates within amino-acid biosynthesis; L-arginine biosynthesis; carbamoyl phosphate from bicarbonate: step 1/1. It participates in pyrimidine metabolism; UMP biosynthesis via de novo pathway; (S)-dihydroorotate from bicarbonate: step 1/3. Large subunit of the glutamine-dependent carbamoyl phosphate synthetase (CPSase). CPSase catalyzes the formation of carbamoyl phosphate from the ammonia moiety of glutamine, carbonate, and phosphate donated by ATP, constituting the first step of 2 biosynthetic pathways, one leading to arginine and/or urea and the other to pyrimidine nucleotides. The large subunit (synthetase) binds the substrates ammonia (free or transferred from glutamine from the small subunit), hydrogencarbonate and ATP and carries out an ATP-coupled ligase reaction, activating hydrogencarbonate by forming carboxy phosphate which reacts with ammonia to form carbamoyl phosphate. In Halomonas eurihalina, this protein is Carbamoyl phosphate synthase large chain.